Here is a 216-residue protein sequence, read N- to C-terminus: Holliday junction branch migration complex subunit RuvA (216 aa).

The interval 1-64 (MISFIKGVLI…EDAQQLYGFK (64 aa)) is domain I. Positions 65-143 (SKVDKKVFQE…KMANEIYAQT (79 aa)) are domain II. The flexible linker stretch occupies residues 144-163 (SGTTTTSQDSQAQQAPTSVV). Positions 164-216 (LANSIFNESVDALLALGYKQKDAEKMARSAMGDATTAAEVIRKALQGSIKSKR) are domain III.

This sequence belongs to the RuvA family. As to quaternary structure, homotetramer. Forms an RuvA(8)-RuvB(12)-Holliday junction (HJ) complex. HJ DNA is sandwiched between 2 RuvA tetramers; dsDNA enters through RuvA and exits via RuvB. An RuvB hexamer assembles on each DNA strand where it exits the tetramer. Each RuvB hexamer is contacted by two RuvA subunits (via domain III) on 2 adjacent RuvB subunits; this complex drives branch migration. In the full resolvosome a probable DNA-RuvA(4)-RuvB(12)-RuvC(2) complex forms which resolves the HJ.

The protein resides in the cytoplasm. The RuvA-RuvB-RuvC complex processes Holliday junction (HJ) DNA during genetic recombination and DNA repair, while the RuvA-RuvB complex plays an important role in the rescue of blocked DNA replication forks via replication fork reversal (RFR). RuvA specifically binds to HJ cruciform DNA, conferring on it an open structure. The RuvB hexamer acts as an ATP-dependent pump, pulling dsDNA into and through the RuvAB complex. HJ branch migration allows RuvC to scan DNA until it finds its consensus sequence, where it cleaves and resolves the cruciform DNA. The protein is Holliday junction branch migration complex subunit RuvA of Francisella tularensis subsp. mediasiatica (strain FSC147).